The chain runs to 1478 residues: MLTAKQDEVGRELRVATGTSLIEYPVKDWLLRRQPTEWEALLGEAAIFSGQDELLWGPFVACVYREPRTTRLNCLFMDRIGVMHLHSVDVSDTSRFYPAVENLRPEYRTQVVRRCLAVGLLKKYVLLDPSAVRLIRAELPYDYDQTTAGDLANTCELVEGQAARDVGQLLVRLGLVQPRHVRSLMLDVVYENHADVVDANNKLVYYLGEQLEQLFDPLTEYSPEPTELSYRVPDQVRTSLSDEMPLMVSICEELLQLQTNFTLSLVGFLQKFLIPLRIKALNEQVPGLSTVKLNNIFPPTIDEVTRINCIFLDALKAALPYGSLEVLKACSITAPYFYKAYTRHEAATKFFSRDIKSFLSTFGKSLSDLNFYSEIKLDTLIHGPQEKLTKLKLIIDRLFDSKDWETNEEQKEADRCYRSICDVIDSFGKDEPPNTYDTRVFTPSGKILTELAKGWPAELQYKWLKRRVVGVFDVISVTDPESRDIVVIFSDYIVFLHVINGNLYYSGDSKKPLISDVLMNSLINEVPLPPKIPKLEVLSHSYIDDVVVSTYGKNSLRFDTLNAERPSSVAYTLASSSVEASYVADLCTKARILEKDTAFHLFKTAIDSFHVYSTAHESEAYKTERIKSPFVLFLNIPDSIGALQDHNATVGLFASLNKNDKVTLVRLGLDGSREESFASLDNFLSLIIEELLIFYPSYLSSATSPLFQQLMQINEQLVQTLLDPKGVHSASKSKCALRTSKKKKMPANLVSTNDNSRTLSPGTIISRTPRTISTITPKQEKRKSVGQASNSPARGSISTTPRKHKRESILGKISGLFHKKDKKENKRNSVGSDTRNRHDNGSVHILRNSSSSFRELESPRQMKRFSSVVHTAVPSSSKRRTSGISPSKGTVNLRALQDAENDDNADISKIPIPEGESLFDDTIRVDGVDADFYAQKDRLSKIYNHDLYGEVVPSAPGSKNVNVVSGATREQEKQQNTQKAIARELLASVDQQKRQPTHSAPAESQIVIPGLPQSNVPQINFGRSPSFIELFGGMRLVLDENDESVNWRRLCSERSLNEKYQIRPATYAGCISGELAPPVGIISDQRDSNLSGDNDADTPLPMHSSNKSILSDETLEKGEFERDFAISTPKSQTVSDVNARRETWGYSHSHDEEIDSEKRANTKPVSAPAPNVIPGLIITANSPTKPWHKENTRIKVSDVRSEGTDVSYISSLKKSSNRLVELSVNSQEDFEDERHTPVIEPIQNPEAPSLIENTETAPVASNSSNEETLSKLLGSQGVIDLTEETIDYSSINRKHASIQTAYPVLDDVEFSTFHMSFGDMKAEDSHLANQRESYLFSNSTIAGKKDESHGPVFYKLPDFVADDSYLGYSAVDQHAKHERNTEIGEEDEAMWVSPSKLDIFDLSKQPESVYKRTSIPAKHAELLSKMRKDGSVKFEESMFIRDNSYVYLGQFLSADEVIEQQDKKLAANTDEMDSARRL.

3 disordered regions span residues 732 to 889 (KSKC…PSKG), 1085 to 1106 (QRDSNLSGDNDADTPLPMHSSN), and 1146 to 1168 (YSHSHDEEIDSEKRANTKPVSAP). Residues 749-761 (LVSTNDNSRTLSP) are compositionally biased toward polar residues. Over residues 763–777 (TIISRTPRTISTITP) the composition is skewed to low complexity. Over residues 786–800 (GQASNSPARGSISTT) the composition is skewed to polar residues. The span at 1146-1160 (YSHSHDEEIDSEKRA) shows a compositional bias: basic and acidic residues.

It belongs to the BUD3 family.

The protein resides in the cell tip. It localises to the cell septum. Required for proper septum positioning and septum construction during septation. Acts as a landmark to mark sites for future septation, and as part of a scaffold that recruits components of the contractile ring to the site of septation. Not required to determine the site of lateral branch formation. This Eremothecium gossypii (strain ATCC 10895 / CBS 109.51 / FGSC 9923 / NRRL Y-1056) (Yeast) protein is Bud site selection protein 3 homolog (BUD3).